The chain runs to 579 residues: MKRDLHQFQGPPDTRFPNHGTANTGSSSKDKMMMVKEEEDGGNMDELLAVLGYKVRSSEMAEVALKLEQLETMMGNVQEDGLSNLATDTVHYNPSELYSWLDNMLTEFNPPPPEINNSFLAGAGGSDYDLKAIPGNAIYARSDQFAIDSSSSSNQAGDNSQSTKRLKSCSSPDSLVTGTTVTTTTTESTRSVGLAAESTRSMVLVDSQENGVRLVHALMACAEAIQNNDLSIAEALVKQIGFLAVSQAGAMRKVATYFAEALARRIYRLSPPQTQIDHSLSDTLQMHFYETCPYLKFAHFTANQAILEAFEGKKRVHVIDFSMNQGLQWPALMQALALREGGPPVFRLTGIGPPAADNSDHLHEVGCKLAQLAEAIHVEFEYRGFVANSLADLDASMLELRPSEIEAVAVNSVFELHKLLGRTGGIEKVLGVVKQIKPVIFTVVEQESSHNGPVFLDRFTESLHYYSTLFDSLEGVPSSQDKVMSEVYLGKQICNLVACEGPDRVERHETLSQWANRFGSSGFAPAHLGSNAFKQASMLLALFNGGEGYRVEENNGCLMLGWHTRPLITTSAWKLSAAH.

Residues 1-31 (MKRDLHQFQGPPDTRFPNHGTANTGSSSKDK) form a disordered region. The DELLA motif motif lies at 45–49 (DELLA). Low complexity-rich tracts occupy residues 149 to 162 (SSSSSNQAGDNSQS) and 174 to 183 (SLVTGTTVTT). Residues 149-183 (SSSSSNQAGDNSQSTKRLKSCSSPDSLVTGTTVTT) form a disordered region. Residues 205–574 (VDSQENGVRL…RPLITTSAWK (370 aa)) enclose the GRAS domain. A leucine repeat I (LRI) region spans residues 212–266 (VRLVHALMACAEAIQNNDLSIAEALVKQIGFLAVSQAGAMRKVATYFAEALARRI). Residues 285 to 350 (QMHFYETCPY…GGPPVFRLTG (66 aa)) form a VHIID region. A VHIID motif is present at residues 316 to 320 (VHVID). The segment at 364–396 (EVGCKLAQLAEAIHVEFEYRGFVANSLADLDAS) is leucine repeat II (LRII). The interval 408 to 495 (VAVNSVFELH…EVYLGKQICN (88 aa)) is PFYRE. The short motif at 416-420 (LHKLL) is the LXXLL motif element. The SAW stretch occupies residues 498–574 (ACEGPDRVER…RPLITTSAWK (77 aa)).

It belongs to the GRAS family. DELLA subfamily. In terms of processing, phosphorylated. Post-translationally, ubiquitinated. Upon GA application it is ubiquitinated, leading to its subsequent degradation.

Its subcellular location is the nucleus. Probable transcriptional regulator that acts as a repressor of the gibberellin (GA) signaling pathway. Probably acts by participating in large multiprotein complexes that represses transcription of GA-inducible genes. Upon GA application, it is degraded by the proteasome, allowing the GA signaling pathway. The polypeptide is DELLA protein RGA2 (RGA2) (Brassica campestris (Field mustard)).